A 346-amino-acid chain; its full sequence is UDP-3-O-acylglucosamine N-acyltransferase (346 aa).

The active-site Proton acceptor is the His253.

Belongs to the transferase hexapeptide repeat family. LpxD subfamily. In terms of assembly, homotrimer.

It catalyses the reaction a UDP-3-O-[(3R)-3-hydroxyacyl]-alpha-D-glucosamine + a (3R)-hydroxyacyl-[ACP] = a UDP-2-N,3-O-bis[(3R)-3-hydroxyacyl]-alpha-D-glucosamine + holo-[ACP] + H(+). It participates in bacterial outer membrane biogenesis; LPS lipid A biosynthesis. Catalyzes the N-acylation of UDP-3-O-acylglucosamine using 3-hydroxyacyl-ACP as the acyl donor. Is involved in the biosynthesis of lipid A, a phosphorylated glycolipid that anchors the lipopolysaccharide to the outer membrane of the cell. This chain is UDP-3-O-acylglucosamine N-acyltransferase, found in Rickettsia felis (strain ATCC VR-1525 / URRWXCal2) (Rickettsia azadi).